Consider the following 66-residue polypeptide: Large ribosomal subunit protein uL29 (66 aa).

Belongs to the universal ribosomal protein uL29 family.

This chain is Large ribosomal subunit protein uL29, found in Thermosipho africanus (strain TCF52B).